The chain runs to 251 residues: Probable transcriptional regulatory protein Amuc_0709 (251 aa).

It belongs to the TACO1 family.

It localises to the cytoplasm. This chain is Probable transcriptional regulatory protein Amuc_0709, found in Akkermansia muciniphila (strain ATCC BAA-835 / DSM 22959 / JCM 33894 / BCRC 81048 / CCUG 64013 / CIP 107961 / Muc).